Consider the following 229-residue polypeptide: Small ribosomal subunit protein uS3 (229 aa).

Residues 39 to 107 (VRQYLTEKLK…TAQINIAEIR (69 aa)) form the KH type-2 domain.

The protein belongs to the universal ribosomal protein uS3 family. As to quaternary structure, part of the 30S ribosomal subunit. Forms a tight complex with proteins S10 and S14.

Functionally, binds the lower part of the 30S subunit head. Binds mRNA in the 70S ribosome, positioning it for translation. This Shewanella frigidimarina (strain NCIMB 400) protein is Small ribosomal subunit protein uS3.